Reading from the N-terminus, the 299-residue chain is Craniofacial development protein 1 (299 aa).

Composition is skewed to acidic residues over residues 1–18 and 25–43; these read MEEF…DEDY and YSED…DGEE. 2 disordered regions span residues 1–156 and 192–224; these read MEEF…ELEK and FFKQ…SSGM. Over residues 49-65 the composition is skewed to basic residues; sequence QGKKRKAQSIPARKRRQ. Residues 70–94 show a composition bias toward acidic residues; sequence LEEEEEEDANSESEGSSSEEEDDAA. Residues Ser82, Ser85, and Ser86 each carry the phosphoserine modification. The span at 95 to 112 shows a compositional bias: basic and acidic residues; the sequence is EQEKGIGSEDARKKKEDE. A Phosphoserine modification is found at Ser116. Lys150 is covalently cross-linked (Glycyl lysine isopeptide (Lys-Gly) (interchain with G-Cter in SUMO2)). Residues 178–217 are hydrophilic; it reads VTKEVDATSKEAKSFFKQNEKEKPQANVPSALPSLPAGSG. Positions 192–201 are enriched in basic and acidic residues; the sequence is FFKQNEKEKP. Ser216 bears the Phosphoserine mark. Positions 218 to 299 constitute a BCNT-C domain; that stretch reads LKRSSGMSSL…RDLRLSKMKP (82 aa). An N6-methyllysine modification is found at Lys219. Phosphoserine is present on Ser250.

In terms of processing, phosphorylated by CK2 (casein kinase II) in vitro. Ubiquitous.

It localises to the chromosome. Its subcellular location is the centromere. The protein resides in the kinetochore. In terms of biological role, may play a role during embryogenesis. In Homo sapiens (Human), this protein is Craniofacial development protein 1 (CFDP1).